A 245-amino-acid chain; its full sequence is Bax inhibitor 1 (245 aa).

The Cytoplasmic segment spans residues 1 to 30; the sequence is MADTANYINDRFQTFMNGLGDRYEPYVREH. The chain crosses the membrane as a helical span at residues 31 to 51; it reads LSKVYMVLGSTAAATAMGAML. Residues 52–55 are Lumenal-facing; that stretch reads QMRD. Residues 56-76 traverse the membrane as a helical segment; it reads FLDLGVLAAVATLVLVLGLHF. Topologically, residues 77–88 are cytoplasmic; that stretch reads YKDDGKNYYTRL. Residues 89-109 form a helical membrane-spanning segment; the sequence is GMLYAFGFCSGQTLGPLLGYI. Residues 110 to 115 lie on the Lumenal side of the membrane; the sequence is CSINPA. A helical membrane pass occupies residues 116–136; the sequence is IILSALTGTFVTFISLSLSAL. At 137–142 the chain is on the cytoplasmic side; that stretch reads LAEQGK. Residues 143-163 form a helical membrane-spanning segment; it reads YLYLGGMLVSVINTMALLSLF. Residues 164–169 lie on the Lumenal side of the membrane; that stretch reads NMVFKS. Residues 170 to 190 form a helical membrane-spanning segment; the sequence is YFVQVTQLYVGVFVMAAFIVY. At 191–245 the chain is on the cytoplasmic side; the sequence is DTQNIVEKCRNGNRDVVQHALDLFFDVLSMFRRLLIILTQKEERKQNERRQNKTK.

It belongs to the BI1 family.

It localises to the endoplasmic reticulum membrane. In terms of biological role, suppressor of apoptosis. Modulates unfolded protein response signaling. Negatively regulates autophagy and autophagosome formation, especially during periods of nutrient deprivation, and reduces cell survival during starvation. This chain is Bax inhibitor 1, found in Drosophila melanogaster (Fruit fly).